Consider the following 745-residue polypeptide: Phosphoribosylformylglycinamidine synthase subunit PurL (745 aa).

H54 is a catalytic residue. Positions 57 and 96 each coordinate ATP. E98 contacts Mg(2+). Residues 99–102 and R121 each bind substrate; that span reads SHNH. The active-site Proton acceptor is the H100. Mg(2+) is bound at residue D122. Residue Q250 participates in substrate binding. A Mg(2+)-binding site is contributed by D278. Position 322–324 (322–324) interacts with substrate; the sequence is ESQ. Residues D503 and G540 each coordinate ATP. Residue N541 coordinates Mg(2+). S543 lines the substrate pocket.

This sequence belongs to the FGAMS family. In terms of assembly, monomer. Part of the FGAM synthase complex composed of 1 PurL, 1 PurQ and 2 PurS subunits.

It localises to the cytoplasm. It catalyses the reaction N(2)-formyl-N(1)-(5-phospho-beta-D-ribosyl)glycinamide + L-glutamine + ATP + H2O = 2-formamido-N(1)-(5-O-phospho-beta-D-ribosyl)acetamidine + L-glutamate + ADP + phosphate + H(+). Its pathway is purine metabolism; IMP biosynthesis via de novo pathway; 5-amino-1-(5-phospho-D-ribosyl)imidazole from N(2)-formyl-N(1)-(5-phospho-D-ribosyl)glycinamide: step 1/2. Part of the phosphoribosylformylglycinamidine synthase complex involved in the purines biosynthetic pathway. Catalyzes the ATP-dependent conversion of formylglycinamide ribonucleotide (FGAR) and glutamine to yield formylglycinamidine ribonucleotide (FGAM) and glutamate. The FGAM synthase complex is composed of three subunits. PurQ produces an ammonia molecule by converting glutamine to glutamate. PurL transfers the ammonia molecule to FGAR to form FGAM in an ATP-dependent manner. PurS interacts with PurQ and PurL and is thought to assist in the transfer of the ammonia molecule from PurQ to PurL. The sequence is that of Phosphoribosylformylglycinamidine synthase subunit PurL from Helicobacter hepaticus (strain ATCC 51449 / 3B1).